The following is a 1067-amino-acid chain: Myocardin-related transcription factor B (1067 aa).

RPEL repeat units follow at residues 46–71, 90–115, and 134–159; these read EVLQ…PPLK, NFLK…EETL, and DDLN…PVDL. Disordered stretches follow at residues 175 to 223 and 249 to 286; these read NLDT…NTTI and PLSC…PRVK. Polar residues-rich tracts occupy residues 193 to 203 and 212 to 223; these read QPASQESQGSA and SDSSSPVSNTTI. Residues 268 to 283 show a composition bias toward basic and acidic residues; that stretch reads KHTEKPRSKKSKDPKP. The 35-residue stretch at 390–424 folds into the SAP domain; it reads LDDMKVAELKMELKLRGLPVSGTKMDLIERLKPFQ. A coiled-coil region spans residues 540–594; the sequence is GNTPNVELDAVEKDRKLQEKEKQIEELKRKLEQEQKLVEVLKKQLELEKRGQQQQ. The segment covering 799 to 819 has biased composition (polar residues); the sequence is ISTSAQPQRSTQLTAVQNGPT. A disordered region spans residues 799-829; sequence ISTSAQPQRSTQLTAVQNGPTSLHEKSSTPP.

In terms of assembly, interacts with SRF.

The protein localises to the nucleus. Its function is as follows. Poor transcriptional factor which uses the canonical single or multiple CArG boxes DNA sequence. Acts as a cofactor of serum response factor (SRF) with the potential to modulate SRF target genes. The protein is Myocardin-related transcription factor B (mrtfb) of Xenopus laevis (African clawed frog).